The chain runs to 156 residues: Single-stranded DNA-binding protein 1 (156 aa).

The 104-residue stretch at 1-104 (MLNRTILVGR…VVADSIQFLE (104 aa)) folds into the SSB domain. Positions 122–146 (QTRGQSQYSNNKPVKDNPFANANCP) are disordered.

Homotetramer.

This Staphylococcus aureus (strain MSSA476) protein is Single-stranded DNA-binding protein 1 (ssb1).